Reading from the N-terminus, the 359-residue chain is Homoserine O-acetyltransferase (359 aa).

The 284-residue stretch at 49–332 (VLICHALTGS…QSSYGHDAFL (284 aa)) folds into the AB hydrolase-1 domain. Catalysis depends on Ser-143, which acts as the Nucleophile. Residue Arg-212 coordinates substrate. Residues Asp-299 and His-328 contribute to the active site. Asp-329 is a binding site for substrate.

Belongs to the AB hydrolase superfamily. MetX family. As to quaternary structure, homodimer.

It localises to the cytoplasm. It carries out the reaction L-homoserine + acetyl-CoA = O-acetyl-L-homoserine + CoA. Its pathway is amino-acid biosynthesis; L-methionine biosynthesis via de novo pathway; O-acetyl-L-homoserine from L-homoserine: step 1/1. Functionally, transfers an acetyl group from acetyl-CoA to L-homoserine, forming acetyl-L-homoserine. This Trichormus variabilis (strain ATCC 29413 / PCC 7937) (Anabaena variabilis) protein is Homoserine O-acetyltransferase.